Reading from the N-terminus, the 128-residue chain is Aspartate 1-decarboxylase (128 aa).

Ser25 (schiff-base intermediate with substrate; via pyruvic acid) is an active-site residue. The residue at position 25 (Ser25) is a Pyruvic acid (Ser). Thr57 is a binding site for substrate. Tyr58 (proton donor) is an active-site residue. Position 73–75 (73–75 (GSA)) interacts with substrate.

It belongs to the PanD family. In terms of assembly, heterooctamer of four alpha and four beta subunits. The cofactor is pyruvate. Post-translationally, is synthesized initially as an inactive proenzyme, which is activated by self-cleavage at a specific serine bond to produce a beta-subunit with a hydroxyl group at its C-terminus and an alpha-subunit with a pyruvoyl group at its N-terminus.

It is found in the cytoplasm. The enzyme catalyses L-aspartate + H(+) = beta-alanine + CO2. It functions in the pathway cofactor biosynthesis; (R)-pantothenate biosynthesis; beta-alanine from L-aspartate: step 1/1. In terms of biological role, catalyzes the pyruvoyl-dependent decarboxylation of aspartate to produce beta-alanine. The chain is Aspartate 1-decarboxylase from Burkholderia thailandensis (strain ATCC 700388 / DSM 13276 / CCUG 48851 / CIP 106301 / E264).